The chain runs to 367 residues: Chorismate synthase (367 aa).

Arg-48 lines the NADP(+) pocket. FMN contacts are provided by residues Arg-125–Ser-127, Gly-283, Lys-298–Ser-302, and Arg-324.

The protein belongs to the chorismate synthase family. As to quaternary structure, homotetramer. It depends on FMNH2 as a cofactor.

It carries out the reaction 5-O-(1-carboxyvinyl)-3-phosphoshikimate = chorismate + phosphate. It participates in metabolic intermediate biosynthesis; chorismate biosynthesis; chorismate from D-erythrose 4-phosphate and phosphoenolpyruvate: step 7/7. Catalyzes the anti-1,4-elimination of the C-3 phosphate and the C-6 proR hydrogen from 5-enolpyruvylshikimate-3-phosphate (EPSP) to yield chorismate, which is the branch point compound that serves as the starting substrate for the three terminal pathways of aromatic amino acid biosynthesis. This reaction introduces a second double bond into the aromatic ring system. The sequence is that of Chorismate synthase from Agathobacter rectalis (strain ATCC 33656 / DSM 3377 / JCM 17463 / KCTC 5835 / VPI 0990) (Eubacterium rectale).